A 220-amino-acid polypeptide reads, in one-letter code: Inner membrane protein YqjA (220 aa).

Residues 1-27 (MELLTQLLQALWAQDFETLANPSMIGM) are Periplasmic-facing. A helical transmembrane segment spans residues 28-48 (LYFVLFVILFLENGLLPAAFL). Residues 49-52 (PGDS) are Cytoplasmic-facing. The next 2 membrane-spanning stretches (helical) occupy residues 53–73 (LLVL…QTIL) and 74–94 (LLTV…RWLG). Over 95–154 (NTRTVQNWLSHLPAHYHQRAHHLFHKHGLSALLIGRFIAFVRTLLPTIAGLSGLNNARFQ) the chain is Cytoplasmic. The helical transmembrane segment at 155–175 (FFNWMSGLLWVLILTTLGYML) threads the bilayer. Residues 176-191 (GKTPVFLKYEDQLMSC) lie on the Periplasmic side of the membrane. The chain crosses the membrane as a helical span at residues 192 to 212 (LMLLPVVLLVFGLAGSLVVLW). Over 213–220 (KKKYGNRG) the chain is Cytoplasmic.

It belongs to the DedA family.

It localises to the cell inner membrane. Its function is as follows. May be a membrane transporter required for proton motive force (PMF)-dependent drug efflux. Required, with YghB, for the proper export of certain periplasmic amidases and, possibly, other Tat substrates. May play a role in determining membrane lipid composition. This Escherichia coli (strain K12) protein is Inner membrane protein YqjA (yqjA).